The following is a 542-amino-acid chain: Chaperonin GroEL 2 (542 aa).

ATP is bound by residues 29–32 (TLGP), 86–90 (DGTTT), Gly413, 477–479 (NAA), and Asp493.

The protein belongs to the chaperonin (HSP60) family. In terms of assembly, forms a cylinder of 14 subunits composed of two heptameric rings stacked back-to-back. Interacts with the co-chaperonin GroES.

The protein localises to the cytoplasm. It catalyses the reaction ATP + H2O + a folded polypeptide = ADP + phosphate + an unfolded polypeptide.. In terms of biological role, together with its co-chaperonin GroES, plays an essential role in assisting protein folding. The GroEL-GroES system forms a nano-cage that allows encapsulation of the non-native substrate proteins and provides a physical environment optimized to promote and accelerate protein folding. The polypeptide is Chaperonin GroEL 2 (Frankia alni (strain DSM 45986 / CECT 9034 / ACN14a)).